The sequence spans 125 residues: Small ribosomal subunit protein uS12 (125 aa).

3-methylthioaspartic acid is present on Asp-89.

The protein belongs to the universal ribosomal protein uS12 family. In terms of assembly, part of the 30S ribosomal subunit. Contacts proteins S8 and S17. May interact with IF1 in the 30S initiation complex.

In terms of biological role, with S4 and S5 plays an important role in translational accuracy. Its function is as follows. Interacts with and stabilizes bases of the 16S rRNA that are involved in tRNA selection in the A site and with the mRNA backbone. Located at the interface of the 30S and 50S subunits, it traverses the body of the 30S subunit contacting proteins on the other side and probably holding the rRNA structure together. The combined cluster of proteins S8, S12 and S17 appears to hold together the shoulder and platform of the 30S subunit. This is Small ribosomal subunit protein uS12 from Ralstonia nicotianae (strain ATCC BAA-1114 / GMI1000) (Ralstonia solanacearum).